The primary structure comprises 1427 residues: Coiled-coil domain-containing protein 144A (1427 aa).

Over residues methionine 1–glycine 11 the composition is skewed to basic and acidic residues. Disordered stretches follow at residues methionine 1–glutamine 32, alanine 87–arginine 189, leucine 213–glutamate 261, asparagine 453–arginine 485, and glutamate 528–asparagine 586. Composition is skewed to polar residues over residues proline 129–glutamate 150 and valine 167–threonine 178. The span at glutamine 224–glutamine 234 shows a compositional bias: acidic residues. The span at asparagine 453–lysine 467 shows a compositional bias: polar residues. Residues tyrosine 490–leucine 545 adopt a coiled-coil conformation. Positions glutamate 528 to asparagine 537 are enriched in basic and acidic residues. Low complexity predominate over residues glycine 543 to glycine 552. Positions proline 563–valine 584 are enriched in basic and acidic residues. 2 coiled-coil regions span residues leucine 648–glutamate 1129 and phenylalanine 1155–threonine 1309.

Belongs to the CCDC144 family.

Its function is as follows. May play a role in preventing the formation of kidney stones through inhibition of calcium oxalate monohydrate (COM) crystallization, attenuating COM-induced apoptotic injury to renal epithelial cells. May exhibit antilithiatic (preventing the formation of kidney stones) activity through crystal binding, hindering the crystal attachment to renal epithelial cells, a pre-requisite to initiate inflammatory response. In Homo sapiens (Human), this protein is Coiled-coil domain-containing protein 144A (CCDC144A).